Consider the following 194-residue polypeptide: Bis(5'-nucleosyl)-tetraphosphatase, symmetrical (194 aa).

In terms of domain architecture, HD spans 18 to 132; the sequence is RYNHSLRVAE…IFIADYIEPG (115 aa). H21 is a binding site for ADP. Positions 21, 50, and 51 each coordinate Fe cation. ADP is bound by residues 51–54, H83, 109–110, D127, R133, and 172–177; these read DFCK, HT, and TVYNKT. D127 serves as a coordination point for Fe cation.

This sequence belongs to the Ap4A hydrolase YqeK family. As to quaternary structure, homodimer.

It catalyses the reaction P(1),P(4)-bis(5'-adenosyl) tetraphosphate + H2O = 2 ADP + 2 H(+). Inhibited by EDTA. Hydrolyzes diadenosine 5',5'''-P1,P4-tetraphosphate (Ap4A) to yield ADP. Can also hydrolyze Ap3A, Ap5A, Ap4G, Ap4U and Gp4G, always releasing ADP or GDP as one of the products, but it exhibits a marked preference for Ap4A, which is mainly exerted at the substrate affinity level. In Staphylococcus aureus (strain NCTC 8325 / PS 47), this protein is Bis(5'-nucleosyl)-tetraphosphatase, symmetrical.